The chain runs to 370 residues: Sensor protein GtcS (370 aa).

2 consecutive transmembrane segments (helical) span residues 2 to 22 (ITAY…VFYL) and 40 to 60 (AWIV…VYLY). The region spanning 66-118 (KRITGPLEKITDAIQKMREGEFAQRLCFKADYELTLIQEHFNEMVAHLEKTEA) is the HAMP domain. The 223-residue stretch at 133–355 (DLSHDFKTPI…RLENDLPYRL (223 aa)) folds into the Histidine kinase domain.

It is found in the cell membrane. The enzyme catalyses ATP + protein L-histidine = ADP + protein N-phospho-L-histidine.. Member of the two-component regulatory system GtcS/GtcR which may act in the control of the transcription of the grs operon which encodes the multienzymes involved in the biosynthesis of the peptide antibiotic gramicidin S. Probably activates GtcR by phosphorylation. This chain is Sensor protein GtcS (gtcS), found in Aneurinibacillus migulanus (Bacillus migulanus).